Consider the following 284-residue polypeptide: L-ribulose-5-phosphate 3-epimerase UlaE (284 aa).

It belongs to the L-ribulose-5-phosphate 3-epimerase family.

The catalysed reaction is L-ribulose 5-phosphate = L-xylulose 5-phosphate. It participates in cofactor degradation; L-ascorbate degradation; D-xylulose 5-phosphate from L-ascorbate: step 3/4. Its function is as follows. Catalyzes the isomerization of L-xylulose-5-phosphate to L-ribulose-5-phosphate. Is involved in the anaerobic L-ascorbate utilization. The sequence is that of L-ribulose-5-phosphate 3-epimerase UlaE from Escherichia coli (strain K12 / MC4100 / BW2952).